We begin with the raw amino-acid sequence, 640 residues long: 1,4-alpha-glucan branching enzyme GlgB (640 aa).

The Nucleophile role is filled by D318. E371 acts as the Proton donor in catalysis.

This sequence belongs to the glycosyl hydrolase 13 family. GlgB subfamily. As to quaternary structure, monomer.

It catalyses the reaction Transfers a segment of a (1-&gt;4)-alpha-D-glucan chain to a primary hydroxy group in a similar glucan chain.. Its pathway is glycan biosynthesis; glycogen biosynthesis. Functionally, catalyzes the formation of the alpha-1,6-glucosidic linkages in glycogen by scission of a 1,4-alpha-linked oligosaccharide from growing alpha-1,4-glucan chains and the subsequent attachment of the oligosaccharide to the alpha-1,6 position. This chain is 1,4-alpha-glucan branching enzyme GlgB, found in Francisella tularensis subsp. tularensis (strain FSC 198).